The chain runs to 104 residues: Thioredoxin (104 aa).

The Thioredoxin domain maps to 2–104; that stretch reads KQVSDASFEE…KLFEWVEASV (103 aa). Cys29 and Cys32 are oxidised to a cystine.

The protein belongs to the thioredoxin family.

Functionally, participates in various redox reactions through the reversible oxidation of its active center dithiol to a disulfide and catalyzes dithiol-disulfide exchange reactions. The chain is Thioredoxin (trxA) from Rhodospirillum rubrum.